The chain runs to 526 residues: ATP synthase subunit alpha (526 aa).

G171–T178 lines the ATP pocket.

This sequence belongs to the ATPase alpha/beta chains family. In terms of assembly, F-type ATPases have 2 components, CF(1) - the catalytic core - and CF(0) - the membrane proton channel. CF(1) has five subunits: alpha(3), beta(3), gamma(1), delta(1), epsilon(1). CF(0) has four main subunits: a, b, b' and c.

It is found in the cell inner membrane. It catalyses the reaction ATP + H2O + 4 H(+)(in) = ADP + phosphate + 5 H(+)(out). Produces ATP from ADP in the presence of a proton gradient across the membrane. The alpha chain is a regulatory subunit. This Chlorobium phaeobacteroides (strain BS1) protein is ATP synthase subunit alpha.